A 774-amino-acid polypeptide reads, in one-letter code: MTTESKTKTVTHILGYPRVGAQRELKFAQEKYWRGEIEQKELLAVGSELRQRHWKDQSASGLDFVTAGDFAWYDHVLTTSLLLGHVPARHNNGFPDLDTLFKVGRGQSQNSCGCGEAASDMTKWFNTNYHYIVPEFSKNDKFNVSWSQLFDEIAEAQKQGHNVKPVLLGPLSYLWLGKEVNDEEVEQGFDRLSLLPRLLTAYQAIFSKLSALGVEWVQIDEPILALELPKAWADSFKLAYQVIQSDVKLLLTTYFDGVEHHLDKITKLAVNGLHIDVSAAPDQLDAIVSALPKEWVLSVGAVNGRNVWRADLERLHERLQPVKEALGDKLWIASSCSLLHSPVDLEQETELSKETLQWFAFAKQKLREVTLLADALDGNQNAILACHQYSQPLRERESAEHINKPAVQQRLAAITPALAERAEAYSVRAQHQAEKLGLPLLPTTTIGSFPQTSDIRQQRSAYRTGKLNEQDYVTAMKGHIADAVERQERLDLDVLVHGEAERNDMVEYFAENLNGFQATRFGWVQSYGSRCVKPAIVVADIEREAPITVSWTQYAQSLTTKQMKGMLTGPVTILGWTFPREDITRKEIAQQLALVLRDEVSDLQQAGINIIQIDEPAIREGLPIKKSDQKAYLDWAVEAFKISAASAKSETQIHTHMCYSEFNEIIESVAALDADVITIETSRSNMELLKAFEDFNYPNEIGPGVYDIHSPNIPSQEWIVDLIETAAARVPVERLWVNPDCGLKTRNWKETEAALENMVKAAKALRKKWQSNAA.

Residues 23–26 and Lys-123 contribute to the 5-methyltetrahydropteroyltri-L-glutamate site; that span reads RELK. Residues 446-448 and Glu-499 each bind L-homocysteine; that span reads IGS. L-methionine is bound by residues 446-448 and Glu-499; that span reads IGS. 5-methyltetrahydropteroyltri-L-glutamate contacts are provided by residues 530-531 and Trp-576; that span reads RC. Position 614 (Asp-614) interacts with L-homocysteine. Asp-614 serves as a coordination point for L-methionine. Glu-620 contributes to the 5-methyltetrahydropteroyltri-L-glutamate binding site. Positions 656, 658, and 680 each coordinate Zn(2+). His-709 functions as the Proton donor in the catalytic mechanism. Residue Cys-741 participates in Zn(2+) binding.

It belongs to the vitamin-B12 independent methionine synthase family. Zn(2+) serves as cofactor.

It catalyses the reaction 5-methyltetrahydropteroyltri-L-glutamate + L-homocysteine = tetrahydropteroyltri-L-glutamate + L-methionine. Its pathway is amino-acid biosynthesis; L-methionine biosynthesis via de novo pathway; L-methionine from L-homocysteine (MetE route): step 1/1. Functionally, catalyzes the transfer of a methyl group from 5-methyltetrahydrofolate to homocysteine resulting in methionine formation. The chain is 5-methyltetrahydropteroyltriglutamate--homocysteine methyltransferase from Aliivibrio fischeri (strain MJ11) (Vibrio fischeri).